A 130-amino-acid chain; its full sequence is Small ribosomal subunit protein uS8 (130 aa).

It belongs to the universal ribosomal protein uS8 family. In terms of assembly, part of the 30S ribosomal subunit.

In terms of biological role, one of the primary rRNA binding proteins, it binds directly to 16S rRNA central domain where it helps coordinate assembly of the platform of the 30S subunit. The polypeptide is Small ribosomal subunit protein uS8 (Methanococcus maripaludis (strain C6 / ATCC BAA-1332)).